The chain runs to 163 residues: SsrA-binding protein (163 aa).

Belongs to the SmpB family.

Its subcellular location is the cytoplasm. In terms of biological role, required for rescue of stalled ribosomes mediated by trans-translation. Binds to transfer-messenger RNA (tmRNA), required for stable association of tmRNA with ribosomes. tmRNA and SmpB together mimic tRNA shape, replacing the anticodon stem-loop with SmpB. tmRNA is encoded by the ssrA gene; the 2 termini fold to resemble tRNA(Ala) and it encodes a 'tag peptide', a short internal open reading frame. During trans-translation Ala-aminoacylated tmRNA acts like a tRNA, entering the A-site of stalled ribosomes, displacing the stalled mRNA. The ribosome then switches to translate the ORF on the tmRNA; the nascent peptide is terminated with the 'tag peptide' encoded by the tmRNA and targeted for degradation. The ribosome is freed to recommence translation, which seems to be the essential function of trans-translation. This is SsrA-binding protein from Shewanella putrefaciens (strain CN-32 / ATCC BAA-453).